Here is a 118-residue protein sequence, read N- to C-terminus: DNA-binding protein M164_1799 (118 aa).

It belongs to the PDCD5 family.

In Saccharolobus islandicus (strain M.16.4 / Kamchatka #3) (Sulfolobus islandicus), this protein is DNA-binding protein M164_1799.